The following is a 236-amino-acid chain: MLTEGISIQSYDGHTFGALVGSPAKAPAPVIVIAQEIFGVNAFMRETVSWLVDQGYAAVCPDLYARQAPGTALDPQDERQREQAYKLWQAFDMEAGVGDLEAAIRYARHQPYSNGKVGLVGYCLGGALAFLVAAKGYVDRAVGYYGVGLEKQLKKVPEVKHPALFHMGGQDHFVPAPSRQLITEGFGANPLLQVHWYEEAGHSFARTSSSGYVASAAALANERRLDFLAPLQSKKP.

Active-site residues include C123, D171, and H202.

Belongs to the dienelactone hydrolase family. As to quaternary structure, monomer.

The catalysed reaction is 2-(5-oxo-2,5-dihydrofuran-2-ylidene)acetate + H2O = 4-oxohex-2-enedioate + H(+). It functions in the pathway aromatic compound metabolism; 3-chlorocatechol degradation. Its function is as follows. Ring cleavage of cyclic ester dienelactone to produce maleylacetate. In Pseudomonas knackmussii (strain DSM 6978 / CCUG 54928 / LMG 23759 / B13), this protein is Carboxymethylenebutenolidase (clcD).